A 668-amino-acid polypeptide reads, in one-letter code: RNA-binding protein PIN4 (668 aa).

The interval 1–77 (METSSFENAP…NLNNAPTNGA (77 aa)) is disordered. Residues 8-23 (NAPPAAINDAQDNNIN) are compositionally biased toward low complexity. Residues 24–36 (TETNDQETNQQSI) show a composition bias toward polar residues. Positions 37–46 (ETRDAIDKEN) are enriched in basic and acidic residues. The segment covering 47-74 (GVQTETGENSAKNAEQNVSSTNLNNAPT) has biased composition (polar residues). A Phosphoserine modification is found at Ser56. The RRM domain maps to 85-163 (NAIVIKNIPF…RKLKVEYKKM (79 aa)). The span at 168–188 (ERERIEREKREKRGQLEEQHR) shows a compositional bias: basic and acidic residues. Positions 168–214 (ERERIEREKREKRGQLEEQHRSSSNLSLDSLSKMSGSGNNNTSNNQL) are disordered. Phosphoserine occurs at positions 189, 191, 194, and 197. Positions 189-212 (SSSNLSLDSLSKMSGSGNNNTSNN) are enriched in low complexity. The residue at position 305 (Thr305) is a Phosphothreonine. Disordered regions lie at residues 374–398 (QQQG…NRSQ) and 420–570 (VNNS…QRVP). Ser393 carries the post-translational modification Phosphoserine. The span at 420-449 (VNNSSNSNTINSNNGNGNNVIINNNSASST) shows a compositional bias: low complexity. Over residues 450 to 478 (PKISSQGQFSMQPTLTSPKMNIHHSSQYN) the composition is skewed to polar residues. Ser466 bears the Phosphoserine mark. The span at 479–508 (SADQPQQPQPQTQQNVQSAAQQQQSFLRQQ) shows a compositional bias: low complexity. Residues 509 to 551 (ATLTPSSRIPSGYSANHYQINSVNPLLRNSQISPPNSQIPINS) show a composition bias toward polar residues. Ser541 is modified (phosphoserine). Positions 552–567 (QTLSQAQPPAQSQTQQ) are enriched in low complexity. Ser636, Ser638, Ser640, Ser653, and Ser655 each carry phosphoserine.

Interacts with RAD53. In terms of processing, hyperphosphorylated in response to DNA damage by MEC1.

Its subcellular location is the cytoplasm. Its function is as follows. Involved in normal G2/M phase transition of the mitotic cell cycle. In association with RAD53, also involved in checkpoint control in response to DNA damage. In Saccharomyces cerevisiae (strain ATCC 204508 / S288c) (Baker's yeast), this protein is RNA-binding protein PIN4 (PIN4).